The sequence spans 171 residues: Orange carotenoid-binding domain-containing protein (171 aa).

The 151-residue stretch at 21–171 (GDAVASTITV…ADMGVDPLAD (151 aa)) folds into the OCP N-terminal domain.

The protein belongs to the orange carotenoid-binding protein family. It depends on 3'-hydroxyechinenone as a cofactor.

The protein localises to the cellular thylakoid membrane. In terms of biological role, might act as a photo-protectant, protecting against damage induced by excess light via a process known as non-photochemical quenching (NPQ). This Nostoc sp. (strain PCC 7120 / SAG 25.82 / UTEX 2576) protein is Orange carotenoid-binding domain-containing protein.